A 396-amino-acid polypeptide reads, in one-letter code: Obg-like ATPase 1 (396 aa).

The 261-residue stretch at 23-283 (LKIGIVGLPN…LSAEERQKYL (261 aa)) folds into the OBG-type G domain. 32–37 (NVGKST) provides a ligand contact to ATP. 2 residues coordinate Mg(2+): S36 and T56. Position 231 (L231) interacts with ATP. Positions 267–274 (LELKLQEL) match the Nuclear export signal motif. K294 carries the post-translational modification N6-acetyllysine. The TGS domain maps to 304 to 387 (QLEYFFTAGP…EDGDIIFFKF (84 aa)).

The protein belongs to the TRAFAC class OBG-HflX-like GTPase superfamily. OBG GTPase family. YchF/OLA1 subfamily. In terms of assembly, monomer. Requires Mg(2+) as cofactor. As to expression, expressed in all tissues tested but its expression is more abundant in testis, liver, lung, and brain. Overexpressed in several malignancies, including cancers of the colon, rectum, ovary, lung, stomach, and uterus.

It localises to the cytoplasm. The protein resides in the nucleus. The protein localises to the nucleolus. Hydrolyzes ATP, and can also hydrolyze GTP with lower efficiency. Has lower affinity for GTP. This Homo sapiens (Human) protein is Obg-like ATPase 1.